The chain runs to 331 residues: Centriolar satellite-associated tubulin polyglutamylase complex regulator 1 (331 aa).

The tract at residues proline 283–asparagine 331 is disordered. Basic residues predominate over residues alanine 303–lysine 313. Positions glutamate 318–asparagine 331 are enriched in acidic residues.

This sequence belongs to the CSTPP1 family. As to quaternary structure, interacts with PCM1. Interacts with the complex TPGC. Binds to alpha-tubulin. In terms of tissue distribution, expression in elevated in ciliated tissues/organs, including brain, spinal cord, kidney, eyes, ears and lateral line.

The protein localises to the cytoplasm. It is found in the cytoskeleton. The protein resides in the microtubule organizing center. Its subcellular location is the centrosome. It localises to the centriolar satellite. Regulator of the tubulin polyglutamylase complex (TPGC) that controls cytoskeletal organization, nuclear shape, and cilium disassembly by balancing microtubule and actin assembly. Regulates the assembly and stability of the TPGC and thereby modulates polyglutamylation of the microtubule, which antagonizes MAP4 binding. The protein is Centriolar satellite-associated tubulin polyglutamylase complex regulator 1 (cstpp1) of Danio rerio (Zebrafish).